Reading from the N-terminus, the 153-residue chain is Large ribosomal subunit protein bL9 (153 aa).

It belongs to the bacterial ribosomal protein bL9 family.

Functionally, binds to the 23S rRNA. This is Large ribosomal subunit protein bL9 from Synechococcus sp. (strain JA-3-3Ab) (Cyanobacteria bacterium Yellowstone A-Prime).